The following is a 521-amino-acid chain: Potassium/proton antiporter CemA (521 aa).

Helical transmembrane passes span 68–88 (FVFIIYWSVLECKTSIYLLNI), 294–314 (ALASLQYLGCLILIPWGISFP), 399–419 (ILHLLTDIIYFAIPSASFISG), 446–466 (ILLLTDSCIGFHSPHGWEILI), and 481–501 (IISCFVSTFPVISDTVFKYWI).

It belongs to the CemA family.

It localises to the plastid. The protein resides in the chloroplast inner membrane. It catalyses the reaction K(+)(in) + H(+)(out) = K(+)(out) + H(+)(in). In terms of biological role, contributes to K(+)/H(+) antiport activity by supporting proton efflux to control proton extrusion and homeostasis in chloroplasts in a light-dependent manner to modulate photosynthesis. Prevents excessive induction of non-photochemical quenching (NPQ) under continuous-light conditions. Indirectly promotes efficient inorganic carbon uptake into chloroplasts. This chain is Potassium/proton antiporter CemA, found in Huperzia lucidula (Shining clubmoss).